The sequence spans 591 residues: CTP synthase (591 aa).

Residues 1-281 are amidoligase domain; sequence MPQSRTHSRT…DAYVVRQLGL (281 aa). Ser-23 contacts CTP. Ser-23 contributes to the UTP binding site. ATP-binding positions include 24–29 and Asp-81; that span reads SLGKGL. The Mg(2+) site is built by Asp-81 and Glu-155. CTP is bound by residues 162-164, 202-207, and Lys-238; these read DIE and KTKPTQ. UTP is bound by residues 202-207 and Lys-238; that span reads KTKPTQ. The region spanning 306 to 554 is the Glutamine amidotransferase type-1 domain; the sequence is RIALVGKYVD…VDAALKHKLE (249 aa). Residue Gly-369 coordinates L-glutamine. Cys-396 functions as the Nucleophile; for glutamine hydrolysis in the catalytic mechanism. L-glutamine contacts are provided by residues 397-400, Glu-419, and Arg-480; that span reads LGLQ. Active-site residues include His-527 and Glu-529. The tract at residues 568 to 591 is disordered; that stretch reads AVATDDELADSADRDEVASVDSAG.

It belongs to the CTP synthase family. Homotetramer.

It catalyses the reaction UTP + L-glutamine + ATP + H2O = CTP + L-glutamate + ADP + phosphate + 2 H(+). The enzyme catalyses L-glutamine + H2O = L-glutamate + NH4(+). It carries out the reaction UTP + NH4(+) + ATP = CTP + ADP + phosphate + 2 H(+). The protein operates within pyrimidine metabolism; CTP biosynthesis via de novo pathway; CTP from UDP: step 2/2. Allosterically activated by GTP, when glutamine is the substrate; GTP has no effect on the reaction when ammonia is the substrate. The allosteric effector GTP functions by stabilizing the protein conformation that binds the tetrahedral intermediate(s) formed during glutamine hydrolysis. Inhibited by the product CTP, via allosteric rather than competitive inhibition. Catalyzes the ATP-dependent amination of UTP to CTP with either L-glutamine or ammonia as the source of nitrogen. Regulates intracellular CTP levels through interactions with the four ribonucleotide triphosphates. The chain is CTP synthase from Rhodococcus jostii (strain RHA1).